A 530-amino-acid chain; its full sequence is Ubiquitin carboxyl-terminal hydrolase 17-like protein 1 (530 aa).

The USP domain maps to 80 to 375 (AGLQNMGNTC…QAYVLFYIQK (296 aa)). Cysteine 89 serves as the catalytic Nucleophile. Histidine 334 (proton acceptor) is an active-site residue. Basic and acidic residues-rich tracts occupy residues 382–392 (SESVSRGREPR) and 398–411 (DTDRRAKQGELKRD). The tract at residues 382–411 (SESVSRGREPRALGAEDTDRRAKQGELKRD) is disordered.

The protein belongs to the peptidase C19 family. USP17 subfamily.

It is found in the nucleus. Its subcellular location is the endoplasmic reticulum. It catalyses the reaction Thiol-dependent hydrolysis of ester, thioester, amide, peptide and isopeptide bonds formed by the C-terminal Gly of ubiquitin (a 76-residue protein attached to proteins as an intracellular targeting signal).. In terms of biological role, deubiquitinating enzyme that removes conjugated ubiquitin from specific proteins to regulate different cellular processes that may include cell proliferation, progression through the cell cycle, apoptosis, cell migration, and the cellular response to viral infection. This Homo sapiens (Human) protein is Ubiquitin carboxyl-terminal hydrolase 17-like protein 1 (USP17L1).